The primary structure comprises 379 residues: Lipid-A-disaccharide synthase (379 aa).

Belongs to the LpxB family.

The catalysed reaction is a lipid X + a UDP-2-N,3-O-bis[(3R)-3-hydroxyacyl]-alpha-D-glucosamine = a lipid A disaccharide + UDP + H(+). Its pathway is bacterial outer membrane biogenesis; LPS lipid A biosynthesis. Its function is as follows. Condensation of UDP-2,3-diacylglucosamine and 2,3-diacylglucosamine-1-phosphate to form lipid A disaccharide, a precursor of lipid A, a phosphorylated glycolipid that anchors the lipopolysaccharide to the outer membrane of the cell. In Aeromonas hydrophila subsp. hydrophila (strain ATCC 7966 / DSM 30187 / BCRC 13018 / CCUG 14551 / JCM 1027 / KCTC 2358 / NCIMB 9240 / NCTC 8049), this protein is Lipid-A-disaccharide synthase.